We begin with the raw amino-acid sequence, 651 residues long: Cylicin-1 (651 aa).

Disordered regions lie at residues 110–241 and 267–615; these read LKKA…CSEN and NYSQ…CEPS. Basic and acidic residues-rich tracts occupy residues 111–129 and 146–173; these read KKAE…PLKK and QIVE…EQSK. Over residues 186–195 the composition is skewed to polar residues; the sequence is QNSKTVSKNC. A compositionally biased stretch (basic and acidic residues) spans 196–205; it reads SQKDKKDSKN. The span at 230–241 shows a compositional bias: polar residues; that stretch reads SNDPISEICSEN. The segment covering 271–281 has biased composition (low complexity); the sequence is NNSKNYSLKYT. Repeat copies occupy residues 278-305, 306-342, 343-379, 380-417, 418-453, 454-491, 492-531, and 532-553. 6 stretches are compositionally biased toward basic and acidic residues: residues 284-308, 318-331, 338-368, 375-402, 413-441, and 448-482; these read TKKD…DAKK, KKDD…KDTE, GDSK…KYPE, GDAK…DAKK, LESK…KNDE, and SEPK…KNAE. A compositionally biased stretch (basic residues) spans 495–505; it reads DKKHSKEKKGS. The span at 506–518 shows a compositional bias: basic and acidic residues; sequence KKDIKKDARKDTE. A compositionally biased stretch (polar residues) spans 529–538; the sequence is KTGFKTSTKI. The 8 X approximate tandem repeats stretch occupies residues 532-553; the sequence is FKTSTKIKGSDTESEESLYKPG. Residues 587–607 show a composition bias toward basic and acidic residues; sequence TFNEKGEKASTGRVPPSREKP.

As to quaternary structure, interacts with proteins of spermatozoa head including ACTL7A, CCIN, FAM209A and SPACA1; the interactions may be necessary for proper acrosome attachment to the nuclear envelope. As to expression, testis.

Its subcellular location is the cytoplasm. It is found in the cytoskeleton. It localises to the perinuclear theca. The protein localises to the calyx. Its function is as follows. Plays a role in the establishment of normal sperm morphology during spermatogenesis and is required for acrosome attachment to the nuclear envelope. This chain is Cylicin-1 (CYLC1), found in Homo sapiens (Human).